A 1013-amino-acid polypeptide reads, in one-letter code: GPI ethanolamine phosphate transferase 3 (1013 aa).

A helical transmembrane segment spans residues 41 to 61 (TLYIFLYSALAALQFIAIAFF). N-linked (GlcNAc...) asparagine glycosylation is found at Asn-184, Asn-205, Asn-336, Asn-399, and Asn-423. Helical transmembrane passes span 447–467 (YYSIGTGIILLIISLAMLITI), 484–504 (VPTIIVMPLVSNVCFLGVFYV), and 515–535 (LWASLLATAVGIIIGFYVPIF). Asn-539 carries an N-linked (GlcNAc...) asparagine glycan. A run of 4 helical transmembrane segments spans residues 558-578 (VAAFLITLHALIFTSNSFTIW), 582-602 (IVSFSLTTLGMLTLYEFVFLP), 643-663 (IVGGYHSIVLIVCTRLASLIT), and 682-702 (NYSFSVMLGCLFLVFATPACI). Asn-707 carries an N-linked (GlcNAc...) asparagine glycan. The helical transmembrane segment at 715–735 (AAPIWIGMLMKSILFVNFIYW) threads the bilayer. N-linked (GlcNAc...) asparagine glycosylation is found at Asn-742, Asn-750, and Asn-755. 7 helical membrane-spanning segments follow: residues 761-781 (IVVGVSLVAANIGWMMGPLCI), 802-822 (NAYGAQYFLLVINFFMCILLF), 825-845 (PLAQLSLFLMCNQLLSILEIF), 868-888 (FFSTGHQATIPAVQWDMGFIL), 899-919 (LGIVLNTFGPHILCGISVALL), 943-963 (GMLLIYQTVLCLSTFIWVTNF), and 977-997 (FMFAALSLIVTQLVLTFITIA).

This sequence belongs to the PIGG/PIGN/PIGO family. PIGO subfamily.

It localises to the endoplasmic reticulum membrane. It functions in the pathway glycolipid biosynthesis; glycosylphosphatidylinositol-anchor biosynthesis. Involved in glycosylphosphatidylinositol-anchor biosynthesis. Transfers ethanolamine phosphate to the GPI third mannose which links the GPI-anchor to the C-terminus of the proteins by an amide bond. Involved in cell wall biosynthesis. This chain is GPI ethanolamine phosphate transferase 3 (GPI13), found in Eremothecium gossypii (strain ATCC 10895 / CBS 109.51 / FGSC 9923 / NRRL Y-1056) (Yeast).